Reading from the N-terminus, the 424-residue chain is Trigger factor (424 aa).

Residues 163 to 248 (GDTVVLDFEG…IHEIKAKELP (86 aa)) enclose the PPIase FKBP-type domain.

It belongs to the FKBP-type PPIase family. Tig subfamily.

It localises to the cytoplasm. It catalyses the reaction [protein]-peptidylproline (omega=180) = [protein]-peptidylproline (omega=0). Functionally, involved in protein export. Acts as a chaperone by maintaining the newly synthesized protein in an open conformation. Functions as a peptidyl-prolyl cis-trans isomerase. The sequence is that of Trigger factor from Bacillus licheniformis (strain ATCC 14580 / DSM 13 / JCM 2505 / CCUG 7422 / NBRC 12200 / NCIMB 9375 / NCTC 10341 / NRRL NRS-1264 / Gibson 46).